The sequence spans 392 residues: Dual-specificity RNA methyltransferase RlmN (392 aa).

The active-site Proton acceptor is E116. Positions 122–364 constitute a Radical SAM core domain; that stretch reads EEGRGTLCVS…SPIRTPRGED (243 aa). An intrachain disulfide couples C129 to C369. Positions 136, 140, and 143 each coordinate [4Fe-4S] cluster. S-adenosyl-L-methionine contacts are provided by residues 195–196, S227, 249–251, and N326; these read GE and SFH. C369 serves as the catalytic S-methylcysteine intermediate.

The protein belongs to the radical SAM superfamily. RlmN family. [4Fe-4S] cluster serves as cofactor.

The protein resides in the cytoplasm. It carries out the reaction adenosine(2503) in 23S rRNA + 2 reduced [2Fe-2S]-[ferredoxin] + 2 S-adenosyl-L-methionine = 2-methyladenosine(2503) in 23S rRNA + 5'-deoxyadenosine + L-methionine + 2 oxidized [2Fe-2S]-[ferredoxin] + S-adenosyl-L-homocysteine. The catalysed reaction is adenosine(37) in tRNA + 2 reduced [2Fe-2S]-[ferredoxin] + 2 S-adenosyl-L-methionine = 2-methyladenosine(37) in tRNA + 5'-deoxyadenosine + L-methionine + 2 oxidized [2Fe-2S]-[ferredoxin] + S-adenosyl-L-homocysteine. Its function is as follows. Specifically methylates position 2 of adenine 2503 in 23S rRNA and position 2 of adenine 37 in tRNAs. m2A2503 modification seems to play a crucial role in the proofreading step occurring at the peptidyl transferase center and thus would serve to optimize ribosomal fidelity. The polypeptide is Dual-specificity RNA methyltransferase RlmN (Cereibacter sphaeroides (strain ATCC 17025 / ATH 2.4.3) (Rhodobacter sphaeroides)).